The following is a 449-amino-acid chain: Putative F-box/FBD/LRR-repeat protein At5g62970 (449 aa).

The F-box domain maps to 2–50; sequence DKISGFSDDELLVKILSFLPFKFAITTSVLSKQWKFLWMRVPKLEYDED. LRR repeat units follow at residues 27–52, 81–107, 158–185, 186–211, 252–279, and 328–354; these read TTSV…EDSM, GHRM…RLKF, TLKL…HLER, VTYG…VVEL, YFKL…NITA, and IHNA…EFDE. One can recognise an FBD domain in the interval 368–418; sequence FWNQPNSVPQCLLSTLQTFEWSGYPGSVQGKDLATYILRKSRQLKIATISI.

This Arabidopsis thaliana (Mouse-ear cress) protein is Putative F-box/FBD/LRR-repeat protein At5g62970.